The following is a 173-amino-acid chain: Alpha-crystallin A chain (173 aa).

Position 1 is an N-acetylmethionine (Met-1). The 112-residue stretch at 53-164 folds into the sHSP domain; that stretch reads NFLDSSNSGM…GDRSIPVTRD (112 aa). The Zn(2+) site is built by His-101, Glu-103, and His-108. Cys-132 and Cys-143 are joined by a disulfide. A disordered region spans residues 143-173; that stretch reads CGPKSGGSESGRGDRSIPVTRDDKTNSTPSS. A compositionally biased stretch (basic and acidic residues) spans 153–167; it reads GRGDRSIPVTRDDKT.

This sequence belongs to the small heat shock protein (HSP20) family. As to quaternary structure, heteropolymer composed of three CRYAA and one CRYAB subunits. Inter-subunit bridging via zinc ions enhances stability, which is crucial as there is no protein turn over in the lens. Zinc coordination is achieved at least by His-101, Glu-103 and His-108. His-101 and Glu-103 come from the same molecule within the oligomer, while His-108 residue is provided by another molecule. Can also form homodimers and homotetramers (dimers of dimers) which serve as the building blocks of homooligomers. Part of a complex required for lens intermediate filament formation composed of BFSP1, BFSP2 and CRYAA.

It localises to the cytoplasm. The protein localises to the nucleus. Functionally, contributes to the transparency and refractive index of the lens. May act as a chaperone, preventing aggregation of various proteins under a wide range of stress conditions. The sequence is that of Alpha-crystallin A chain (cryaa) from Psalidodon fasciatus (Banded astyanax).